A 357-amino-acid polypeptide reads, in one-letter code: Uroporphyrinogen decarboxylase (357 aa).

Residues 27-31, D77, Y154, S209, and H330 contribute to the substrate site; that span reads RQAGR.

Belongs to the uroporphyrinogen decarboxylase family. In terms of assembly, homodimer.

Its subcellular location is the cytoplasm. The catalysed reaction is uroporphyrinogen III + 4 H(+) = coproporphyrinogen III + 4 CO2. It participates in porphyrin-containing compound metabolism; protoporphyrin-IX biosynthesis; coproporphyrinogen-III from 5-aminolevulinate: step 4/4. Functionally, catalyzes the decarboxylation of four acetate groups of uroporphyrinogen-III to yield coproporphyrinogen-III. This chain is Uroporphyrinogen decarboxylase, found in Acinetobacter baumannii (strain ACICU).